Consider the following 30-residue polypeptide: Propionyl-CoA carboxylase alpha chain (30 aa).

Residues 1–30 (PKIRKVLVANRGEIAIRVMRTXKELGIATV) form the Biotin carboxylation domain.

In terms of assembly, dodecamer composed of six biotin-containing alpha subunits and six beta subunits. It depends on Mg(2+) as a cofactor. Mn(2+) serves as cofactor. Requires biotin as cofactor.

The catalysed reaction is propanoyl-CoA + hydrogencarbonate + ATP = (S)-methylmalonyl-CoA + ADP + phosphate + H(+). Its pathway is metabolic intermediate metabolism; propanoyl-CoA degradation; succinyl-CoA from propanoyl-CoA: step 1/3. This is one of the 2 subunits of the biotin-dependent propionyl-CoA carboxylase (PCC), the enzyme catalyzing the carboxylation of propionyl-CoA/propanoyl-CoA to D-methylmalonyl-CoA/(S)-methylmalonyl-CoA. Within the holoenzyme, the alpha subunit catalyzes the ATP-dependent carboxylation of the biotin carried by the biotin carboxyl carrier (BCC) domain, while the beta subunit then transfers the carboxyl group from carboxylated biotin to propionyl-CoA. Propionyl-CoA carboxylase also carboxylates acetyl-CoA, butyryl-CoA and succinyl-CoA. This chain is Propionyl-CoA carboxylase alpha chain, found in Myxococcus xanthus.